The sequence spans 568 residues: Sulfite reductase [NADPH] hemoprotein beta-component (568 aa).

Residues C426, C432, C471, and C475 each contribute to the [4Fe-4S] cluster site. C475 lines the siroheme pocket.

It belongs to the nitrite and sulfite reductase 4Fe-4S domain family. Alpha(8)-beta(8). The alpha component is a flavoprotein, the beta component is a hemoprotein. Siroheme serves as cofactor. Requires [4Fe-4S] cluster as cofactor.

The enzyme catalyses hydrogen sulfide + 3 NADP(+) + 3 H2O = sulfite + 3 NADPH + 4 H(+). Its pathway is sulfur metabolism; hydrogen sulfide biosynthesis; hydrogen sulfide from sulfite (NADPH route): step 1/1. In terms of biological role, component of the sulfite reductase complex that catalyzes the 6-electron reduction of sulfite to sulfide. This is one of several activities required for the biosynthesis of L-cysteine from sulfate. This is Sulfite reductase [NADPH] hemoprotein beta-component from Xylella fastidiosa (strain M23).